We begin with the raw amino-acid sequence, 76 residues long: Acyl carrier protein (76 aa).

Positions 1 to 76 (MSIEERVKKI…SAIDYVQNNQ (76 aa)) constitute a Carrier domain. Ser36 is subject to O-(pantetheine 4'-phosphoryl)serine.

This sequence belongs to the acyl carrier protein (ACP) family. In terms of processing, 4'-phosphopantetheine is transferred from CoA to a specific serine of apo-ACP by AcpS. This modification is essential for activity because fatty acids are bound in thioester linkage to the sulfhydryl of the prosthetic group.

It is found in the cytoplasm. It functions in the pathway lipid metabolism; fatty acid biosynthesis. Functionally, carrier of the growing fatty acid chain in fatty acid biosynthesis. This is Acyl carrier protein from Actinobacillus succinogenes (strain ATCC 55618 / DSM 22257 / CCUG 43843 / 130Z).